The chain runs to 248 residues: Ubiquinone biosynthesis O-methyltransferase (248 aa).

Residues Arg-41, Gly-72, Asp-93, and Met-136 each coordinate S-adenosyl-L-methionine.

This sequence belongs to the methyltransferase superfamily. UbiG/COQ3 family.

It catalyses the reaction a 3-demethylubiquinol + S-adenosyl-L-methionine = a ubiquinol + S-adenosyl-L-homocysteine + H(+). The catalysed reaction is a 3-(all-trans-polyprenyl)benzene-1,2-diol + S-adenosyl-L-methionine = a 2-methoxy-6-(all-trans-polyprenyl)phenol + S-adenosyl-L-homocysteine + H(+). Its pathway is cofactor biosynthesis; ubiquinone biosynthesis. Functionally, O-methyltransferase that catalyzes the 2 O-methylation steps in the ubiquinone biosynthetic pathway. The chain is Ubiquinone biosynthesis O-methyltransferase from Rhizobium johnstonii (strain DSM 114642 / LMG 32736 / 3841) (Rhizobium leguminosarum bv. viciae).